The following is a 424-amino-acid chain: Protein ImpB (424 aa).

One can recognise a UmuC domain in the interval 2-189; that stretch reads FALADINSFY…QPVGEVWGVG (188 aa).

This sequence belongs to the DNA polymerase type-Y family.

Involved in UV protection and mutation. The protein is Protein ImpB (impB) of Salmonella typhimurium.